Reading from the N-terminus, the 128-residue chain is Probable prefoldin subunit 6 (128 aa).

Belongs to the prefoldin subunit beta family. Heterohexamer of two PFD-alpha type and four PFD-beta type subunits.

Its subcellular location is the cytoplasm. Functionally, binds specifically to cytosolic chaperonin (c-CPN) and transfers target proteins to it. Binds to nascent polypeptide chain and promotes folding in an environment in which there are many competing pathways for nonnative proteins. Required for positioning of the mitotic spindle. The polypeptide is Probable prefoldin subunit 6 (Caenorhabditis briggsae).